The primary structure comprises 540 residues: Gamma-cadinene synthase (540 aa).

Positions 292, 296, 436, 440, and 444 each coordinate Mg(2+). The DDXXD motif signature appears at Asp-292–Asp-296.

It belongs to the terpene synthase family. Mg(2+) is required as a cofactor. Requires Mn(2+) as cofactor.

It catalyses the reaction (2E,6E)-farnesyl diphosphate = (+)-gamma-cadinene + diphosphate. It participates in secondary metabolite biosynthesis; terpenoid biosynthesis. Sesquiterpene synthase that catalyzes the cyclization of trans,trans-farnesyl diphosphate (FPP) to gamma cadinene. The protein is Gamma-cadinene synthase (CDS) of Ocimum basilicum (Sweet basil).